A 99-amino-acid polypeptide reads, in one-letter code: Small ribosomal subunit protein bS20 (99 aa).

Belongs to the bacterial ribosomal protein bS20 family.

In terms of biological role, binds directly to 16S ribosomal RNA. This chain is Small ribosomal subunit protein bS20, found in Cyanothece sp. (strain PCC 7425 / ATCC 29141).